The primary structure comprises 110 residues: NAD(P)H-quinone oxidoreductase subunit M (110 aa).

The protein belongs to the complex I NdhM subunit family. As to quaternary structure, NDH-1 can be composed of about 15 different subunits; different subcomplexes with different compositions have been identified which probably have different functions.

It localises to the cellular thylakoid membrane. The enzyme catalyses a plastoquinone + NADH + (n+1) H(+)(in) = a plastoquinol + NAD(+) + n H(+)(out). The catalysed reaction is a plastoquinone + NADPH + (n+1) H(+)(in) = a plastoquinol + NADP(+) + n H(+)(out). Its function is as follows. NDH-1 shuttles electrons from an unknown electron donor, via FMN and iron-sulfur (Fe-S) centers, to quinones in the respiratory and/or the photosynthetic chain. The immediate electron acceptor for the enzyme in this species is believed to be plastoquinone. Couples the redox reaction to proton translocation, and thus conserves the redox energy in a proton gradient. Cyanobacterial NDH-1 also plays a role in inorganic carbon-concentration. This Synechococcus elongatus (strain ATCC 33912 / PCC 7942 / FACHB-805) (Anacystis nidulans R2) protein is NAD(P)H-quinone oxidoreductase subunit M.